We begin with the raw amino-acid sequence, 73 residues long: uncharacterized protein (73 aa).

The next 2 membrane-spanning stretches (helical) occupy residues I10–A30 and Y42–I62.

It is found in the cell membrane. This is an uncharacterized protein from Archaeoglobus fulgidus (strain ATCC 49558 / DSM 4304 / JCM 9628 / NBRC 100126 / VC-16).